Here is a 138-residue protein sequence, read N- to C-terminus: Centromere protein S (138 aa).

Met-1 is subject to N-acetylmethionine. The segment at 110-138 (RKAQKKKKSEDGSKNSRQPAEAGVVESEN) is disordered.

This sequence belongs to the TAF9 family. CENP-S/MHF1 subfamily. In terms of assembly, heterodimer with CENPX, sometimes called MHF; this interaction stabilizes both partners. MHF heterodimers can assemble to form tetrameric structures. MHF also coassemble with CENPT-CENPW heterodimers at centromeres to form the tetrameric CENP-T-W-S-X complex. Forms a discrete complex with FANCM and CENPX, called FANCM-MHF; this interaction, probably mediated by direct binding between CENPS and FANCM, leads to synergistic activation of double-stranded DNA binding and strongly stimulates FANCM-mediated DNA remodeling. Recruited by FANCM to the Fanconi anemia (FA) core complex, which consists of CENPS, CENPX, FANCA, FANCB, FANCC, FANCE, FANCF, FANCG, FANCL, FANCM, FAAP24 and FAAP100. The FA core complex associates with Bloom syndrome (BLM) complex, which consists of at least BLM, DNA topoisomerase 3-alpha (TOP3A), RMI1/BLAP75, RPA1/RPA70 and RPA2/RPA32. The super complex between FA and BLM is called BRAFT. Component of the CENPA-CAD complex, composed of CENPI, CENPK, CENPL, CENPO, CENPP, CENPQ, CENPR and CENPS. The CENPA-CAD complex is probably recruited on centromeres by the CENPA-NAC complex, composed of at least CENPA, CENPC, CENPH, CENPM, CENPN, CENPT and CENPU. In terms of tissue distribution, ubiquitously expressed.

The protein localises to the nucleus. The protein resides in the chromosome. It is found in the centromere. It localises to the kinetochore. In terms of biological role, DNA-binding component of the Fanconi anemia (FA) core complex. Required for the normal activation of the FA pathway, leading to monoubiquitination of the FANCI-FANCD2 complex in response to DNA damage, cellular resistance to DNA cross-linking drugs, and prevention of chromosomal breakage. In complex with CENPX (MHF heterodimer), crucial cofactor for FANCM in both binding and ATP-dependent remodeling of DNA. Stabilizes FANCM. In complex with CENPX and FANCM (but not other FANC proteins), rapidly recruited to blocked forks and promotes gene conversion at blocked replication forks. In complex with CENPT, CENPW and CENPX (CENP-T-W-S-X heterotetramer), involved in the formation of a functional kinetochore outer plate, which is essential for kinetochore-microtubule attachment and faithful mitotic progression. As a component of MHF and CENP-T-W-S-X complexes, binds DNA and bends it to form a nucleosome-like structure. DNA-binding function is fulfilled in the presence of CENPX, with the following preference for DNA substates: Holliday junction &gt; double-stranded &gt; splay arm &gt; single-stranded. Does not bind DNA on its own. The protein is Centromere protein S (CENPS) of Homo sapiens (Human).